Here is a 494-residue protein sequence, read N- to C-terminus: NADPH:adrenodoxin oxidoreductase, mitochondrial (494 aa).

Residues 1–34 (MAPRCWHWWRWSAWSGLRPSPSRSTPTPGFCQKF) constitute a mitochondrion transit peptide. Residues Ala-51, Glu-72, Leu-80, and Val-116 each coordinate FAD. NADP(+) is bound by residues 187-190 (QGNV), 231-232 (RR), and Glu-243. At Ser-313 the chain carries Phosphoserine. Residues Trp-401 and 408 to 410 (GVI) contribute to the FAD site. Gly-408 is a binding site for NADP(+).

The protein belongs to the ferredoxin--NADP reductase type 1 family. In terms of assembly, monomer. Interacts directly with FDX1. It depends on FAD as a cofactor. Expressed in the adrenal, testis and ovary and to a lesser extent in the liver and kidney.

The protein localises to the mitochondrion inner membrane. It catalyses the reaction 2 reduced [adrenodoxin] + NADP(+) + H(+) = 2 oxidized [adrenodoxin] + NADPH. The enzyme catalyses 2 reduced [2Fe-2S]-[ferredoxin] + NADP(+) + H(+) = 2 oxidized [2Fe-2S]-[ferredoxin] + NADPH. It participates in steroid metabolism; cholesterol metabolism. Serves as the first electron transfer protein in all the mitochondrial P450 systems including cholesterol side chain cleavage in all steroidogenic tissues, steroid 11-beta hydroxylation in the adrenal cortex, 25-OH-vitamin D3-24 hydroxylation in the kidney, and sterol C-27 hydroxylation in the liver. Also acts as a ferredoxin--NADP(+) reductase essential for coenzyme Q biosynthesis: together with FDX2, transfers the electrons required for the hydroxylation reaction performed by COQ6. In Mus musculus (Mouse), this protein is NADPH:adrenodoxin oxidoreductase, mitochondrial (Fdxr).